The following is a 706-amino-acid chain: Heat shock protein 75 kDa, mitochondrial (706 aa).

Residues 1 to 60 constitute a mitochondrion transit peptide; the sequence is MARELRALLLWGRGLQSALRAPALAGVRRGKPVLHLQKTTVHFRDPTQSLASGISAGQLY. ATP contacts are provided by Asn121 and Asp160. Ser172 carries the post-translational modification Phosphoserine. Residue Asn173 participates in ATP binding. Thr176 carries the phosphothreonine modification. Position 196 is a phosphoserine (Ser196). Residue Phe207 participates in ATP binding. Lys264, Lys326, and Lys334 each carry N6-acetyllysine. Arg404 lines the ATP pocket. Lys426, Lys433, and Lys468 each carry N6-acetyllysine. Phosphothreonine is present on Thr496. The residue at position 570 (Ser570) is a Phosphoserine.

It belongs to the heat shock protein 90 family. As to quaternary structure, binds to the intracellular domain of tumor necrosis factor type 1 receptor. Binds to RB1. Interacts with SRC. Interacts with SDHA.

It is found in the mitochondrion. Its subcellular location is the mitochondrion inner membrane. The protein resides in the mitochondrion matrix. Functionally, chaperone that expresses an ATPase activity. Involved in maintaining mitochondrial function and polarization, downstream of PINK1 and mitochondrial complex I. Is a negative regulator of mitochondrial respiration able to modulate the balance between oxidative phosphorylation and aerobic glycolysis. The impact of TRAP1 on mitochondrial respiration is probably mediated by modulation of mitochondrial SRC and inhibition of SDHA. This Rattus norvegicus (Rat) protein is Heat shock protein 75 kDa, mitochondrial (Trap1).